The chain runs to 211 residues: uncharacterized protein (211 aa).

Belongs to the nucleoside deoxyribosyltransferase family.

It is found in the cytoplasm. It localises to the nucleus. This is an uncharacterized protein from Schizosaccharomyces pombe (strain 972 / ATCC 24843) (Fission yeast).